A 927-amino-acid chain; its full sequence is DIS3-like exonuclease 2 (927 aa).

The segment covering 1–12 has biased composition (basic residues); the sequence is MDLKPNIRRKEK. The disordered stretch occupies residues 1-168; the sequence is MDLKPNIRRK…DTNNATEMVS (168 aa). Over residues 13–31 the composition is skewed to basic and acidic residues; that stretch reads RNLLKGEAALEKKGSIDRK. Residues 97 to 106 are compositionally biased toward basic residues; that stretch reads VKPKAKKKNS. The segment covering 107-152 has biased composition (basic and acidic residues); that stretch reads KEKISKSSKQDEHKTDVHKESVSKLSKNLESRNNRDENSAKREKNN. Residues 153–168 show a composition bias toward polar residues; it reads SHQVEADTNNATEMVS. Residues Asp-453 and Asp-462 each contribute to the Mg(2+) site.

The protein belongs to the RNR ribonuclease family. DIS3L2 subfamily. It depends on Mg(2+) as a cofactor. Mn(2+) is required as a cofactor.

Its subcellular location is the cytoplasm. The protein localises to the P-body. Its function is as follows. 3'-5'-exoribonuclease that specifically recognizes RNAs polyuridylated at their 3' end and mediates their degradation. Component of an exosome-independent RNA degradation pathway that mediates degradation of cytoplasmic mRNAs that have been deadenylated and subsequently uridylated at their 3'. This is DIS3-like exonuclease 2 (dis32) from Schizosaccharomyces pombe (strain 972 / ATCC 24843) (Fission yeast).